Consider the following 101-residue polypeptide: Small ribosomal subunit protein bS6 (101 aa).

Belongs to the bacterial ribosomal protein bS6 family.

In terms of biological role, binds together with bS18 to 16S ribosomal RNA. The chain is Small ribosomal subunit protein bS6 from Pseudarthrobacter chlorophenolicus (strain ATCC 700700 / DSM 12829 / CIP 107037 / JCM 12360 / KCTC 9906 / NCIMB 13794 / A6) (Arthrobacter chlorophenolicus).